A 371-amino-acid polypeptide reads, in one-letter code: Glyco-Gag protein (371 aa).

Residues 1–51 (MSGASSGTAIGAHLFGVSPEYRVLIGDEGAGPSKSLSEVSFSVWYRSRAAR) are Cytoplasmic-facing. The chain crosses the membrane as a helical span at residues 52-72 (LVILCLVASFLVPCLTFLIAE). Topologically, residues 73–371 (AVMGQTVTTP…NVIDETFPLT (299 aa)) are extracellular. An N-linked (GlcNAc...) asparagine; by host glycan is attached at N134. Disordered regions lie at residues 171–281 (VRPF…NNRP) and 350–371 (VPGEDGRPTQLPNVIDETFPLT). The span at 174 to 193 (FLPPPKPPTPLPQPLSPQPS) shows a compositional bias: pro residues. The span at 194-203 (APLTSSLYPV) shows a compositional bias: low complexity. Pro residues-rich tracts occupy residues 204 to 220 (VPKPDPPKPPVLPPDPS) and 230 to 245 (EPPPYPGGHGPPPSGP).

In terms of processing, glycosylated by host. Post-translationally, cleaved by host near the middle of the molecule, releasing the c-terminal half containing capsid and nucleoprotein domains op GAG.

It localises to the host cell membrane. In terms of biological role, plays a role in viral particle release. Presumably acts by facilitating the fission of the virion bud at the cell surface. The chain is Glyco-Gag protein from Feline sarcoma virus (strain Snyder-Theilen).